The sequence spans 307 residues: uncharacterized protein (307 aa).

This is an uncharacterized protein from Archaeoglobus fulgidus (strain ATCC 49558 / DSM 4304 / JCM 9628 / NBRC 100126 / VC-16).